The chain runs to 640 residues: MTEQTATQNYSFQAEVAQLLHLVTHSLYSNPEIFLRELISNASDACDKLRFEGINHPEYYEDDANLRVRVSLDKENKTITISDNGIGLSQQEAIDNLGTIAKSGTKDFMSKLTGDQKSDAQLIGQFGVGFYSGFIVADKITVESRRAGLPANDGVRWISGGTGDFEVQQITKDSRGTSIILHLRDDALDYLDAWKVKQIINKYSDHISLPIEMQKEVWQEEEVAEGEEPKGGQYVKTDEWEVINSASALWTRSKNEISEEQYIEFYKNLTHDFDAPLAWSHNRVEGNTEYTQLLYIPAKASSDIFTREAKAGIKLYVKRVFIMDDADNLIPNYLRFVKGVIDSADLPLNVSRELLQESRDVKTIREGNTRRVLTLLDGLAKSEDEKDQEKFKTFYQEFGSVLKEGLGEDFTNRERILKLLRYATSNQDEISTSFADYKARMKEGQKAIYYVSADSLAAAKNSPQLELFKKKGIEVLLMSERVDEWAMNFVHEFDGTPLQNVSKGAVDLGDLQDAEEKKALEQAAEQFKPVVDKLTDALKDKTKEVRVTTRLVDSPACLVTSDGELSPQLIRMLKQAGQAVPESKPILEINPEHPLVQKLEGSAQFDDLANVIFDQAVIAEGGLPEDPAAYVKRINSLLLK.

The interval Met-1 to Arg-352 is a; substrate-binding. Residues Glu-353–Arg-571 are b. A c region spans residues Met-572–Lys-640.

Belongs to the heat shock protein 90 family. Homodimer.

It localises to the cytoplasm. Its function is as follows. Molecular chaperone. Has ATPase activity. The protein is Chaperone protein HtpG of Acinetobacter baylyi (strain ATCC 33305 / BD413 / ADP1).